Reading from the N-terminus, the 419-residue chain is MAQEVIKIRGGQALKGEVEISGAKNSAVAIIPATLLAQGQVKLEGLPQISDVETLVSLLEDLNIEARLNGKQLEVDTTQIENAPLPNNKVESLRASYYMMGAMLGRFKKCVIGLPGGCPLGPRPIDQHIKGFKALGAEIDESSNTSMKLVAKELRGAHIFLDMVSVGATINIMLAAVHAKGQTVIDNAAKEPEVVDVANFLMSMGADIRGAGTTSIKINGVEELKGSEYQIIPDRIEAGSYMCMAAAMGEEVILHNIVPKHVEALTVKLQELGVDIEIEDEKIIIRKQTPYKNVDIKTLVYPGFATDLQQPITPLLFMTEGPSFVTDTIYPARFKHVEELQCMGANIKSDEGTAVIKPSTLNGAEVYASDLRAGACLITAGLIAEGVTTIFNVKHIYRGYTNIVEHLKALGADIWTETV.

24-25 (KN) contributes to the phosphoenolpyruvate binding site. Arginine 94 provides a ligand contact to UDP-N-acetyl-alpha-D-glucosamine. The active-site Proton donor is the cysteine 118. Cysteine 118 is modified (2-(S-cysteinyl)pyruvic acid O-phosphothioketal). Residues 123-127 (RPIDQ), aspartate 307, and isoleucine 329 each bind UDP-N-acetyl-alpha-D-glucosamine.

The protein belongs to the EPSP synthase family. MurA subfamily.

It is found in the cytoplasm. The catalysed reaction is phosphoenolpyruvate + UDP-N-acetyl-alpha-D-glucosamine = UDP-N-acetyl-3-O-(1-carboxyvinyl)-alpha-D-glucosamine + phosphate. It participates in cell wall biogenesis; peptidoglycan biosynthesis. Cell wall formation. Adds enolpyruvyl to UDP-N-acetylglucosamine. This chain is UDP-N-acetylglucosamine 1-carboxyvinyltransferase 2, found in Staphylococcus epidermidis (strain ATCC 12228 / FDA PCI 1200).